The chain runs to 532 residues: Aspartate--tRNA ligase 1, cytoplasmic (532 aa).

Residues 7-41 adopt a coiled-coil conformation; that stretch reads LEECGEKISKKESKKRAAKLEKLLRKQEREEATSS. The interval 31 to 58 is disordered; that stretch reads RKQEREEATSSSLSLEEEDESCSSNYGD. Residues 88-169 constitute a DNA-binding region (OB); sequence VSIRGRLHKN…QVEIHVRKMY (82 aa). E260 contacts L-aspartate. Positions 282–285 are aspartate; it reads QLHK. R304 is a binding site for L-aspartate. ATP-binding positions include 304–306, 312–314, and E455; these read RAE and RHL. Positions 455 and 458 each coordinate Mg(2+). L-aspartate is bound by residues S458 and R462. 503-506 lines the ATP pocket; the sequence is GLER.

It belongs to the class-II aminoacyl-tRNA synthetase family. Type 2 subfamily.

Its subcellular location is the cytoplasm. It localises to the cytosol. The catalysed reaction is tRNA(Asp) + L-aspartate + ATP = L-aspartyl-tRNA(Asp) + AMP + diphosphate. Its function is as follows. Catalyzes the specific attachment of an amino acid to its cognate tRNA in a 2 step reaction: the amino acid (AA) is first activated by ATP to form AA-AMP and then transferred to the acceptor end of the tRNA. This is Aspartate--tRNA ligase 1, cytoplasmic from Arabidopsis thaliana (Mouse-ear cress).